The primary structure comprises 348 residues: Nitrogenase vanadium-iron protein beta chain (348 aa).

Positions 31, 56, 115, and 153 each coordinate [8Fe-7S] cluster.

This sequence belongs to the NifD/NifK/NifE/NifN family. In terms of assembly, hexamer of two alpha, two beta, and two delta chains. [8Fe-7S] cluster is required as a cofactor.

The enzyme catalyses N2 + 8 reduced [2Fe-2S]-[ferredoxin] + 16 ATP + 16 H2O = H2 + 8 oxidized [2Fe-2S]-[ferredoxin] + 2 NH4(+) + 16 ADP + 16 phosphate + 6 H(+). This vanadium-iron protein is part of the nitrogenase complex that catalyzes the key enzymatic reactions in nitrogen fixation. In Azorhizophilus paspali (Azotobacter paspali), this protein is Nitrogenase vanadium-iron protein beta chain (vnfK).